The primary structure comprises 287 residues: ATP synthase gamma chain (287 aa).

The protein belongs to the ATPase gamma chain family. In terms of assembly, F-type ATPases have 2 components, CF(1) - the catalytic core - and CF(0) - the membrane proton channel. CF(1) has five subunits: alpha(3), beta(3), gamma(1), delta(1), epsilon(1). CF(0) has three main subunits: a, b and c.

The protein resides in the cell membrane. In terms of biological role, produces ATP from ADP in the presence of a proton gradient across the membrane. The gamma chain is believed to be important in regulating ATPase activity and the flow of protons through the CF(0) complex. The protein is ATP synthase gamma chain of Mycoplasmopsis agalactiae (strain NCTC 10123 / CIP 59.7 / PG2) (Mycoplasma agalactiae).